The primary structure comprises 599 residues: Cytadherence high molecular weight protein 3 (599 aa).

A compositionally biased stretch (polar residues) spans 220–236; the sequence is VQVDSGSQNHSFNNSPS. Positions 220-241 are disordered; sequence VQVDSGSQNHSFNNSPSLKPPL.

It localises to the cell projection. The protein localises to the attachment organelle membrane. In terms of biological role, component of the cytoskeleton-like structure which stabilizes the shape of the wall-less mycoplasma. This cytoskeleton-like network of accessory proteins containing HMW proteins 1 to 5 allows the proper anchoring of cytadhesin proteins in the mycoplasmal membrane at the attachment organelle. Essential for successful surface parasitism. In Mycoplasma genitalium (strain ATCC 33530 / DSM 19775 / NCTC 10195 / G37) (Mycoplasmoides genitalium), this protein is Cytadherence high molecular weight protein 3 (hmw3).